A 520-amino-acid chain; its full sequence is Transactivator/viroplasmin protein (520 aa).

The disordered stretch occupies residues 487–520 (QDASADSGPKDGPPPTRSIVEKEDVPTTSSKQVD).

This sequence belongs to the caulimoviridae viroplasmin family.

It is found in the host cytoplasm. In terms of biological role, enhances the ribosomal termination-reinitiation event leading to the translation of major open reading frames on the polycistronic viral RNAs. This is Transactivator/viroplasmin protein from Cauliflower mosaic virus (strain CM-1841) (CaMV).